The sequence spans 118 residues: Ribosome-binding factor A (118 aa).

The protein belongs to the RbfA family. In terms of assembly, monomer. Binds 30S ribosomal subunits, but not 50S ribosomal subunits or 70S ribosomes.

The protein resides in the cytoplasm. Functionally, one of several proteins that assist in the late maturation steps of the functional core of the 30S ribosomal subunit. Associates with free 30S ribosomal subunits (but not with 30S subunits that are part of 70S ribosomes or polysomes). Required for efficient processing of 16S rRNA. May interact with the 5'-terminal helix region of 16S rRNA. The protein is Ribosome-binding factor A of Streptococcus pyogenes serotype M1.